The chain runs to 317 residues: Transaldolase (317 aa).

The active-site Schiff-base intermediate with substrate is Lys126.

It belongs to the transaldolase family. Type 1 subfamily. Homodimer.

The protein localises to the cytoplasm. It carries out the reaction D-sedoheptulose 7-phosphate + D-glyceraldehyde 3-phosphate = D-erythrose 4-phosphate + beta-D-fructose 6-phosphate. The protein operates within carbohydrate degradation; pentose phosphate pathway; D-glyceraldehyde 3-phosphate and beta-D-fructose 6-phosphate from D-ribose 5-phosphate and D-xylulose 5-phosphate (non-oxidative stage): step 2/3. In terms of biological role, transaldolase is important for the balance of metabolites in the pentose-phosphate pathway. The protein is Transaldolase of Burkholderia cenocepacia (strain ATCC BAA-245 / DSM 16553 / LMG 16656 / NCTC 13227 / J2315 / CF5610) (Burkholderia cepacia (strain J2315)).